The sequence spans 174 residues: Disulfide bond formation protein B (174 aa).

Over 1–12 (MLNWIDTAPRRI) the chain is Cytoplasmic. The chain crosses the membrane as a helical span at residues 13–29 (LALISAACVAMLAFGMY). Residues 30–47 (LQHVVGLEPCPMCIVQRY) are Periplasmic-facing. Residues C39 and C42 are joined by a disulfide bond. A helical membrane pass occupies residues 48 to 64 (ALIGVAVFAGLASARGQ). The Cytoplasmic segment spans residues 65-69 (KGWWM). Residues 70-87 (TWSVLALVAAGFGAFVAA) traverse the membrane as a helical segment. The Periplasmic portion of the chain corresponds to 88–143 (RQSWLQWYPPEIATCGRDFYGMIENYPISRAIPMIFRGSGDCTAVDWTFLGGSIAN). C102 and C129 are oxidised to a cystine. The helical transmembrane segment at 144-162 (WSFVWFLLFAVLLLVLLVR) threads the bilayer. At 163-174 (GGRGAPDTLARA) the chain is on the cytoplasmic side.

It belongs to the DsbB family.

Its subcellular location is the cell inner membrane. Functionally, required for disulfide bond formation in some periplasmic proteins. Acts by oxidizing the DsbA protein. This is Disulfide bond formation protein B from Acidovorax sp. (strain JS42).